We begin with the raw amino-acid sequence, 498 residues long: Glycerol kinase (498 aa).

ADP is bound at residue T13. The ATP site is built by T13, T14, and S15. T13 serves as a coordination point for sn-glycerol 3-phosphate. R17 is a binding site for ADP. Residues R83, E84, Y135, and D244 each coordinate sn-glycerol 3-phosphate. Glycerol contacts are provided by R83, E84, Y135, D244, and Q245. The ADP site is built by T266 and G309. Residues T266, G309, Q313, and G410 each contribute to the ATP site. Positions 410 and 414 each coordinate ADP.

It belongs to the FGGY kinase family.

The enzyme catalyses glycerol + ATP = sn-glycerol 3-phosphate + ADP + H(+). It participates in polyol metabolism; glycerol degradation via glycerol kinase pathway; sn-glycerol 3-phosphate from glycerol: step 1/1. Inhibited by fructose 1,6-bisphosphate (FBP). Functionally, key enzyme in the regulation of glycerol uptake and metabolism. Catalyzes the phosphorylation of glycerol to yield sn-glycerol 3-phosphate. In Koribacter versatilis (strain Ellin345), this protein is Glycerol kinase.